The chain runs to 291 residues: ATP synthase gamma chain (291 aa).

It belongs to the ATPase gamma chain family. F-type ATPases have 2 components, CF(1) - the catalytic core - and CF(0) - the membrane proton channel. CF(1) has five subunits: alpha(3), beta(3), gamma(1), delta(1), epsilon(1). CF(0) has three main subunits: a, b and c.

It localises to the cell inner membrane. In terms of biological role, produces ATP from ADP in the presence of a proton gradient across the membrane. The gamma chain is believed to be important in regulating ATPase activity and the flow of protons through the CF(0) complex. The sequence is that of ATP synthase gamma chain from Ruegeria sp. (strain TM1040) (Silicibacter sp.).